The chain runs to 189 residues: uncharacterized protein (189 aa).

Basic and acidic residues predominate over residues 1–15 (MDKHGVKTPLWRKEV). Residues 1 to 77 (MDKHGVKTPL…SPLRQESSSQ (77 aa)) form a disordered region. Composition is skewed to acidic residues over residues 16-29 (EDPEAREEDLEDDS) and 46-56 (SATETEEDSRD). Positions 65 to 77 (VSYSPLRQESSSQ) are enriched in polar residues.

This is an uncharacterized protein from Mus musculus (Mouse).